A 227-amino-acid polypeptide reads, in one-letter code: dTTP/UTP pyrophosphatase (227 aa).

D98 (proton acceptor) is an active-site residue.

It belongs to the Maf family. YhdE subfamily. A divalent metal cation serves as cofactor.

Its subcellular location is the cytoplasm. It carries out the reaction dTTP + H2O = dTMP + diphosphate + H(+). The catalysed reaction is UTP + H2O = UMP + diphosphate + H(+). Nucleoside triphosphate pyrophosphatase that hydrolyzes dTTP and UTP. May have a dual role in cell division arrest and in preventing the incorporation of modified nucleotides into cellular nucleic acids. The protein is dTTP/UTP pyrophosphatase of Bartonella quintana (strain Toulouse) (Rochalimaea quintana).